A 139-amino-acid polypeptide reads, in one-letter code: MAMTYHLDVVSAEQQMFSGLVQKIQVTGSEGELGIYPGHAPLLTAIKPGMVRIVKQHGEEEYIYLSGGILEVQPNTVTVLSDTAIRGQDLDEARALEAKRKAEDHIRNSHGDVDYAQASAELSKAIAKLRVIELTRKAM.

The protein belongs to the ATPase epsilon chain family. In terms of assembly, F-type ATPases have 2 components, CF(1) - the catalytic core - and CF(0) - the membrane proton channel. CF(1) has five subunits: alpha(3), beta(3), gamma(1), delta(1), epsilon(1). CF(0) has three main subunits: a, b and c.

The protein localises to the cell inner membrane. Produces ATP from ADP in the presence of a proton gradient across the membrane. This Pectobacterium carotovorum subsp. carotovorum (strain PC1) protein is ATP synthase epsilon chain.